Reading from the N-terminus, the 157-residue chain is NADPH-dependent 7-cyano-7-deazaguanine reductase (157 aa).

Cysteine 55 (thioimide intermediate) is an active-site residue. Residue aspartate 62 is the Proton donor of the active site. Substrate-binding positions include 77 to 79 (VES) and 96 to 97 (HE).

The protein belongs to the GTP cyclohydrolase I family. QueF type 1 subfamily.

The protein resides in the cytoplasm. It carries out the reaction 7-aminomethyl-7-carbaguanine + 2 NADP(+) = 7-cyano-7-deazaguanine + 2 NADPH + 3 H(+). Its pathway is tRNA modification; tRNA-queuosine biosynthesis. Catalyzes the NADPH-dependent reduction of 7-cyano-7-deazaguanine (preQ0) to 7-aminomethyl-7-deazaguanine (preQ1). This chain is NADPH-dependent 7-cyano-7-deazaguanine reductase, found in Neisseria meningitidis serogroup A / serotype 4A (strain DSM 15465 / Z2491).